We begin with the raw amino-acid sequence, 148 residues long: 3-dehydroquinate dehydratase (148 aa).

Catalysis depends on tyrosine 23, which acts as the Proton acceptor. Residues asparagine 74, histidine 80, and aspartate 87 each contribute to the substrate site. The Proton donor role is filled by histidine 100. Substrate is bound by residues 101-102 and arginine 111; that span reads IS.

It belongs to the type-II 3-dehydroquinase family. As to quaternary structure, homododecamer.

It catalyses the reaction 3-dehydroquinate = 3-dehydroshikimate + H2O. Its pathway is metabolic intermediate biosynthesis; chorismate biosynthesis; chorismate from D-erythrose 4-phosphate and phosphoenolpyruvate: step 3/7. Functionally, catalyzes a trans-dehydration via an enolate intermediate. This is 3-dehydroquinate dehydratase from Anoxybacillus flavithermus (strain DSM 21510 / WK1).